Here is a 1432-residue protein sequence, read N- to C-terminus: DNA-directed RNA polymerase subunit beta (1432 aa).

It belongs to the RNA polymerase beta chain family. The RNAP catalytic core consists of 2 alpha, 1 beta, 1 beta' and 1 omega subunit. When a sigma factor is associated with the core the holoenzyme is formed, which can initiate transcription.

The catalysed reaction is RNA(n) + a ribonucleoside 5'-triphosphate = RNA(n+1) + diphosphate. In terms of biological role, DNA-dependent RNA polymerase catalyzes the transcription of DNA into RNA using the four ribonucleoside triphosphates as substrates. The polypeptide is DNA-directed RNA polymerase subunit beta (Solibacter usitatus (strain Ellin6076)).